Consider the following 409-residue polypeptide: Arginine deiminase (409 aa).

Residue Cys-398 is the Amidino-cysteine intermediate of the active site.

This sequence belongs to the arginine deiminase family.

The protein localises to the cytoplasm. It carries out the reaction L-arginine + H2O = L-citrulline + NH4(+). Its pathway is amino-acid degradation; L-arginine degradation via ADI pathway; carbamoyl phosphate from L-arginine: step 1/2. The polypeptide is Arginine deiminase (Metamycoplasma arthritidis (strain 158L3-1) (Mycoplasma arthritidis)).